We begin with the raw amino-acid sequence, 447 residues long: Kynureninase (447 aa).

Residues Leu-106, Thr-107, 134-137 (FPSD), Asp-220, His-223, and Tyr-245 contribute to the pyridoxal 5'-phosphate site. Lys-246 is modified (N6-(pyridoxal phosphate)lysine). Pyridoxal 5'-phosphate is bound by residues Trp-275 and Asn-303.

Belongs to the kynureninase family. As to quaternary structure, homodimer. Pyridoxal 5'-phosphate is required as a cofactor.

The protein resides in the cytoplasm. It carries out the reaction L-kynurenine + H2O = anthranilate + L-alanine + H(+). The catalysed reaction is 3-hydroxy-L-kynurenine + H2O = 3-hydroxyanthranilate + L-alanine + H(+). The protein operates within amino-acid degradation; L-kynurenine degradation; L-alanine and anthranilate from L-kynurenine: step 1/1. Its pathway is cofactor biosynthesis; NAD(+) biosynthesis; quinolinate from L-kynurenine: step 2/3. In terms of biological role, catalyzes the cleavage of L-kynurenine (L-Kyn) and L-3-hydroxykynurenine (L-3OHKyn) into anthranilic acid (AA) and 3-hydroxyanthranilic acid (3-OHAA), respectively. The sequence is that of Kynureninase from Eremothecium gossypii (strain ATCC 10895 / CBS 109.51 / FGSC 9923 / NRRL Y-1056) (Yeast).